The primary structure comprises 930 residues: Nonribosomal peptide synthetase btyA (930 aa).

Residues E31–I440 form an adenylation (A) domain region. The Carrier domain maps to P570–H647. At S607 the chain carries O-(pantetheine 4'-phosphoryl)serine. Positions P667–V920 are thioesterase (TE) domain.

This sequence belongs to the NRP synthetase family.

It carries out the reaction 2 3-(4-hydroxyphenyl)pyruvate + H(+) = (2S)-2-(4-hydoxybenzyl)-3-(4-hydroxyphenyl)-2-furonol carboxylate + H2O. Its pathway is secondary metabolite biosynthesis. In terms of biological role, nonribosomal peptide synthetase; part of the gene cluster that mediates the biosynthesis of butyrolactones, natural products that show a wide range of biological activities such as antitumor, antiparasitic or anti-inflammatory activity. The nonribosomal peptide synthetase btyA is responsible for the production of butyrolactone II, the core structure of butyrolactones. BtyA first activates 4-hydroxyphenylpyruvate (HPPA) through its A domain to AMP-HPPA. The HPPA unit is then loaded to the T domain and eventually transferred to the TE domain. Upon loading of another HPPA unit to the T domain, the TE domain promotes the enolate formation on the unit attached. Then aldol condensation establishes the carbon-carbon bond between the two units, followed by ester cyclization, and keto-enol tautomerization to yield the gamma-butyrolactone core. Hydrolysis, and finally esterification of the exposed carboxylic acid group yields butyrolactone II. Two additional enzymes, a prenyltransferase and an epoxidase, may be involved in the tailoring modifications of butyrolactone II to give butyrolactone III and butyrolactone I. This is Nonribosomal peptide synthetase btyA from Aspergillus terreus (strain NIH 2624 / FGSC A1156).